Here is a 48-residue protein sequence, read N- to C-terminus: Large ribosomal subunit protein eL40 (48 aa).

The protein belongs to the eukaryotic ribosomal protein eL40 family.

This chain is Large ribosomal subunit protein eL40, found in Methanobrevibacter smithii (strain ATCC 35061 / DSM 861 / OCM 144 / PS).